The primary structure comprises 344 residues: MSQELTLQQRMDGEAGSDPLRQAVKEAVAALARAAVDISDLTCRGALAGITGQAQGRNTDGDIQKDLDVRADQIIRDALGKLPIAALASEEMADLDILNPAAPICVAFDPLDGSSNINTNMSVGTIFSIMPTPSDVNAAFRQAGSAQLAAGFVVYGPQTSLVLTLGRGVDIFTLDRADRVFKLTGSSVQIPTDANEFAINASNRRHWDLPVRAYIDECLAGADGPCGKNFNMRWIGSLVAEAFRILIRGGIFLYPGDARDGYEEGRLVVYEAHPMAFIVEQAGGGASTGRKRVLDIVPDSLHQRVPLIMGSIKNVQRLEHMHTVPDVALEANAPLFGNRGLFRV.

Mg(2+) contacts are provided by glutamate 90, aspartate 109, leucine 111, and aspartate 112. Substrate contacts are provided by residues 112–115 and asparagine 200; that span reads DGSS. Glutamate 271 is a binding site for Mg(2+).

Belongs to the FBPase class 1 family. Homotetramer. It depends on Mg(2+) as a cofactor.

It is found in the cytoplasm. It catalyses the reaction beta-D-fructose 1,6-bisphosphate + H2O = beta-D-fructose 6-phosphate + phosphate. The protein operates within carbohydrate biosynthesis; gluconeogenesis. The sequence is that of Fructose-1,6-bisphosphatase class 1 from Nitrobacter vulgaris.